Consider the following 128-residue polypeptide: Fluoride-specific ion channel FluC (128 aa).

4 helical membrane passes run 5 to 25, 35 to 55, 67 to 87, and 96 to 116; these read IVAI…LSLA, LGTL…AVVF, LFVI…SVEV, and FGWA…LTAL. Na(+) contacts are provided by Gly-75 and Thr-78.

Belongs to the fluoride channel Fluc/FEX (TC 1.A.43) family.

It is found in the cell inner membrane. It carries out the reaction fluoride(in) = fluoride(out). With respect to regulation, na(+) is not transported, but it plays an essential structural role and its presence is essential for fluoride channel function. Fluoride-specific ion channel. Important for reducing fluoride concentration in the cell, thus reducing its toxicity. This Burkholderia orbicola (strain MC0-3) protein is Fluoride-specific ion channel FluC.